Reading from the N-terminus, the 245-residue chain is Adapter protein MecA (245 aa).

It belongs to the MecA family. Homodimer.

Functionally, enables the recognition and targeting of unfolded and aggregated proteins to the ClpC protease or to other proteins involved in proteolysis. This Streptococcus pneumoniae serotype 19F (strain G54) protein is Adapter protein MecA.